The sequence spans 339 residues: DNA-directed RNA polymerase subunit alpha (339 aa).

The alpha N-terminal domain (alpha-NTD) stretch occupies residues 1-233; the sequence is MVREEVAGST…DLFLPFLHAE (233 aa). Residues 266–339 are alpha C-terminal domain (alpha-CTD); that stretch reads GIPLNCIFID…IDLLKNKLSF (74 aa).

It belongs to the RNA polymerase alpha chain family. In terms of assembly, in plastids the minimal PEP RNA polymerase catalytic core is composed of four subunits: alpha, beta, beta', and beta''. When a (nuclear-encoded) sigma factor is associated with the core the holoenzyme is formed, which can initiate transcription.

It is found in the plastid. It localises to the chloroplast. It carries out the reaction RNA(n) + a ribonucleoside 5'-triphosphate = RNA(n+1) + diphosphate. Its function is as follows. DNA-dependent RNA polymerase catalyzes the transcription of DNA into RNA using the four ribonucleoside triphosphates as substrates. This Hordeum bulbosum (Bulbous barley) protein is DNA-directed RNA polymerase subunit alpha.